Reading from the N-terminus, the 98-residue chain is MSREAMYDIVRAPLITEKATALSEKNQVAFKVAIDATKPEIKVAVETLFGVKVLGVNTLVQKGKTKRFKGRPGQRSDVKKAFVQLAEGQSIDLTAKLV.

The protein belongs to the universal ribosomal protein uL23 family. In terms of assembly, part of the 50S ribosomal subunit. Contacts protein L29, and trigger factor when it is bound to the ribosome.

Its function is as follows. One of the early assembly proteins it binds 23S rRNA. One of the proteins that surrounds the polypeptide exit tunnel on the outside of the ribosome. Forms the main docking site for trigger factor binding to the ribosome. This is Large ribosomal subunit protein uL23 from Gluconacetobacter diazotrophicus (strain ATCC 49037 / DSM 5601 / CCUG 37298 / CIP 103539 / LMG 7603 / PAl5).